Consider the following 348-residue polypeptide: Mycothiol acetyltransferase (348 aa).

2 consecutive N-acetyltransferase domains span residues 12–156 (TSMR…VDVT) and 169–330 (VAVR…HGTP). E44 contacts 1D-myo-inositol 2-(L-cysteinylamino)-2-deoxy-alpha-D-glucopyranoside. 91–93 (LVV) provides a ligand contact to acetyl-CoA. Residues E196, K235, and E253 each contribute to the 1D-myo-inositol 2-(L-cysteinylamino)-2-deoxy-alpha-D-glucopyranoside site. Acetyl-CoA-binding positions include 257–259 (VGV) and 264–270 (QGLGMGR). A 1D-myo-inositol 2-(L-cysteinylamino)-2-deoxy-alpha-D-glucopyranoside-binding site is contributed by Y291. 296–301 (NTVAVH) provides a ligand contact to acetyl-CoA. A disordered region spans residues 320–348 (PPAGSPAHGTPLVRVTDTPSSPGDATMGS). The segment covering 336 to 348 (DTPSSPGDATMGS) has biased composition (polar residues).

It belongs to the acetyltransferase family. MshD subfamily. Monomer.

It carries out the reaction 1D-myo-inositol 2-(L-cysteinylamino)-2-deoxy-alpha-D-glucopyranoside + acetyl-CoA = mycothiol + CoA + H(+). In terms of biological role, catalyzes the transfer of acetyl from acetyl-CoA to desacetylmycothiol (Cys-GlcN-Ins) to form mycothiol. The protein is Mycothiol acetyltransferase of Cellulomonas flavigena (strain ATCC 482 / DSM 20109 / BCRC 11376 / JCM 18109 / NBRC 3775 / NCIMB 8073 / NRS 134).